We begin with the raw amino-acid sequence, 139 residues long: Superoxide dismutase [Cu-Zn] (139 aa).

A lipid anchor (S-palmitoyl cysteine) is attached at Cys-6. Cu cation contacts are provided by His-47 and His-49. Positions 72, 81, and 84 each coordinate Zn(2+). His-114 contributes to the Cu cation binding site. The span at 118-129 (DDLGKGGNDESL) shows a compositional bias: basic and acidic residues. The interval 118–139 (DDLGKGGNDESLKTGNAGGRMA) is disordered.

It belongs to the Cu-Zn superoxide dismutase family. Homodimer. It depends on Cu cation as a cofactor. Requires Zn(2+) as cofactor.

The protein localises to the cytoplasm. The protein resides in the nucleus. It carries out the reaction 2 superoxide + 2 H(+) = H2O2 + O2. In terms of biological role, destroys radicals which are normally produced within the cells and which are toxic to biological systems. The sequence is that of Superoxide dismutase [Cu-Zn] (sod1) from Lampanyctus crocodilus (Jewel lanternfish).